The primary structure comprises 174 residues: Large ribosomal subunit protein uL10 (174 aa).

It belongs to the universal ribosomal protein uL10 family. Part of the ribosomal stalk of the 50S ribosomal subunit. The N-terminus interacts with L11 and the large rRNA to form the base of the stalk. The C-terminus forms an elongated spine to which L12 dimers bind in a sequential fashion forming a multimeric L10(L12)X complex.

Its function is as follows. Forms part of the ribosomal stalk, playing a central role in the interaction of the ribosome with GTP-bound translation factors. The protein is Large ribosomal subunit protein uL10 of Coxiella burnetii (strain CbuK_Q154) (Coxiella burnetii (strain Q154)).